Consider the following 271-residue polypeptide: MEAAAEPGNLAGVRHIILVLSGKGGVGKSTISTELALALRHQGKKVGILDVDLCGPSIPHMLHAQGKAVHQCDSGWVPVFVDQEQSISLMSVGFLLENPDEAVVWRGPKKHALIKQFVSDVAWGELDYLVVDTPPGTSDEHMATVEALRPYKPLGALVVTTPQAVSIGDVRRELTFCKKTGLQVIGVIENMSGFACPHCAECTNVFSSGGGEELARLAGVPFLGSVPLDPQLTRSLEEGRDFIQEFPKSTAYSALTSIAHKVLHQMPALCS.

An N-acetylmethionine modification is found at Met1. Position 22–29 (22–29 (GKGGVGKS)) interacts with ATP. Residues Cys196 and Cys199 each coordinate [4Fe-4S] cluster.

Belongs to the Mrp/NBP35 ATP-binding proteins family. NUBP2/CFD1 subfamily. Heterotetramer of 2 NUBP1 and 2 NUBP2 chains. Interacts with KIFC1. Interacts with NUBP1. [4Fe-4S] cluster serves as cofactor.

The protein localises to the nucleus. The protein resides in the cytoplasm. Its subcellular location is the cytoskeleton. It localises to the microtubule organizing center. It is found in the centrosome. The protein localises to the cilium axoneme. The protein resides in the centriole. Functionally, component of the cytosolic iron-sulfur (Fe/S) protein assembly (CIA) machinery. Required for maturation of extramitochondrial Fe-S proteins. The NUBP1-NUBP2 heterotetramer forms a Fe-S scaffold complex, mediating the de novo assembly of an Fe-S cluster and its transfer to target apoproteins. Negatively regulates cilium formation and structure. This chain is Cytosolic Fe-S cluster assembly factor NUBP2 (Nubp2), found in Rattus norvegicus (Rat).